Reading from the N-terminus, the 404-residue chain is Major outer membrane porin (404 aa).

An N-terminal signal peptide occupies residues 1–22; sequence MKKLLKSVLAFAVLGSASSLHA. The interval 85–110 is disordered; it reads GPVPTTTDTDAAADITTSTPRENPAY. The segment covering 89–103 has biased composition (low complexity); sequence TTTDTDAAADITTST.

Belongs to the chlamydial porin (CP) (TC 1.B.2) family. As to quaternary structure, part of a disulfide cross-linked outer membrane complex (COMC) composed of the major outer membrane porin (MOMP), the small cysteine-rich protein (OmcA) and the large cysteine-rich periplasmic protein (OmcB).

Its subcellular location is the cell outer membrane. In terms of biological role, in elementary bodies (EBs, the infectious stage, which is able to survive outside the host cell) provides the structural integrity of the outer envelope through disulfide cross-links with the small cysteine-rich protein and the large cysteine-rich periplasmic protein. It has been described in publications as the Sarkosyl-insoluble COMC (Chlamydia outer membrane complex), and serves as the functional equivalent of peptidoglycan. Permits diffusion of specific solutes through the outer membrane. This chain is Major outer membrane porin (ompA), found in Chlamydia muridarum.